The sequence spans 95 residues: Co-chaperonin GroES (95 aa).

Belongs to the GroES chaperonin family. As to quaternary structure, heptamer of 7 subunits arranged in a ring. Interacts with the chaperonin GroEL.

It localises to the cytoplasm. Its function is as follows. Together with the chaperonin GroEL, plays an essential role in assisting protein folding. The GroEL-GroES system forms a nano-cage that allows encapsulation of the non-native substrate proteins and provides a physical environment optimized to promote and accelerate protein folding. GroES binds to the apical surface of the GroEL ring, thereby capping the opening of the GroEL channel. In Francisella tularensis subsp. tularensis (strain FSC 198), this protein is Co-chaperonin GroES.